The chain runs to 242 residues: Mediator of RNA polymerase II transcription subunit 19-A (242 aa).

Positions 1–15 (MTEIFSTLFGQNDAQ) are enriched in polar residues. Disordered regions lie at residues 1 to 33 (MTEIFSTLFGQNDAQPPSGPAALGFAPGKPPPS) and 171 to 242 (PPKK…NSLR). The segment covering 171–184 (PPKKKSKHKHRHHH) has biased composition (basic residues). Basic and acidic residues predominate over residues 193–210 (TRTDPTKKKKKKDNEPER). Positions 211–223 (RKKKKDKKKKKNR) are enriched in basic residues. A compositionally biased stretch (polar residues) spans 232–242 (TGSQPNSNSLR).

Belongs to the Mediator complex subunit 19 family. In terms of assembly, component of the Mediator complex.

Its subcellular location is the nucleus. Functionally, component of the Mediator complex, a coactivator involved in the regulated transcription of nearly all RNA polymerase II-dependent genes. Mediator functions as a bridge to convey information from gene-specific regulatory proteins to the basal RNA polymerase II transcription machinery. Mediator is recruited to promoters by direct interactions with regulatory proteins and serves as a scaffold for the assembly of a functional preinitiation complex with RNA polymerase II and the general transcription factors. The chain is Mediator of RNA polymerase II transcription subunit 19-A (med19a) from Danio rerio (Zebrafish).